Reading from the N-terminus, the 355-residue chain is tRNA-specific 2-thiouridylase MnmA (355 aa).

Residues 7-14 (GLSGGVDS) and L33 contribute to the ATP site. The active-site Nucleophile is the C94. The cysteines at positions 94 and 193 are disulfide-linked. G119 provides a ligand contact to ATP. The interval 143–145 (KDQ) is interaction with tRNA. The active-site Cysteine persulfide intermediate is C193. The interaction with tRNA stretch occupies residues 298-299 (RY).

Belongs to the MnmA/TRMU family.

The protein resides in the cytoplasm. The catalysed reaction is S-sulfanyl-L-cysteinyl-[protein] + uridine(34) in tRNA + AH2 + ATP = 2-thiouridine(34) in tRNA + L-cysteinyl-[protein] + A + AMP + diphosphate + H(+). Its function is as follows. Catalyzes the 2-thiolation of uridine at the wobble position (U34) of tRNA, leading to the formation of s(2)U34. The chain is tRNA-specific 2-thiouridylase MnmA from Acaryochloris marina (strain MBIC 11017).